Reading from the N-terminus, the 337-residue chain is Nucleoid-associated protein Avin_11450 (337 aa).

This sequence belongs to the YejK family.

The protein localises to the cytoplasm. Its subcellular location is the nucleoid. The chain is Nucleoid-associated protein Avin_11450 from Azotobacter vinelandii (strain DJ / ATCC BAA-1303).